We begin with the raw amino-acid sequence, 130 residues long: YopE regulator (130 aa).

Functionally, positive regulator of YopE. In Yersinia enterocolitica serotype O:8 / biotype 1B (strain NCTC 13174 / 8081), this protein is YopE regulator (yerA).